Reading from the N-terminus, the 283-residue chain is MSSHSDEIEEEQISRIEKGKGKDCQGGIETVICTSPSIVCLTQKLIAEMIGTYFIVFSGCGVVVVNVLYGGTITFPGICVTWGLIVMVMIYSTGHISGAHFNPAVTVTFAIFRRFPWHQVPLYIGAQFAGSLLASLTLRLMFKVTPEAFFGTTPADSPARALVAEIIISFLLMFVISGVATDNRAVGELAGIAVGMTIMVNVFVAGPISGASMNPARSLGPALVMGVYKHIWVYIVGPVLGVISGGFVYNLIRFTDKPLRELTKSASFLRAVSPSHKGSSSKT.

M1 carries the N-acetylmethionine modification. 2 consecutive transmembrane segments (helical) span residues L45–V65 and G70–I90. An NPA 1 motif is present at residues N102–A104. 3 consecutive transmembrane segments (helical) span residues L122–F142, A161–T181, and L189–S209. An NPA 2 motif is present at residues N214 to A216. Residues I231–L251 traverse the membrane as a helical segment. Phosphoserine is present on S267.

This sequence belongs to the MIP/aquaporin (TC 1.A.8) family. NIP (TC 1.A.8.12) subfamily.

The protein localises to the membrane. Its function is as follows. Potential aquaporin, which may facilitate the transport of water and small neutral solutes across cell membranes. This is Putative aquaporin NIP4-1 (NIP4-1) from Arabidopsis thaliana (Mouse-ear cress).